The chain runs to 362 residues: Protein RecA (362 aa).

77–84 contacts ATP; the sequence is GPESSGKT.

Belongs to the RecA family.

The protein localises to the cytoplasm. Can catalyze the hydrolysis of ATP in the presence of single-stranded DNA, the ATP-dependent uptake of single-stranded DNA by duplex DNA, and the ATP-dependent hybridization of homologous single-stranded DNAs. It interacts with LexA causing its activation and leading to its autocatalytic cleavage. This Nitrobacter winogradskyi (strain ATCC 25391 / DSM 10237 / CIP 104748 / NCIMB 11846 / Nb-255) protein is Protein RecA.